The chain runs to 48 residues: ATP synthase protein 8 (48 aa).

A helical membrane pass occupies residues 4 to 24; sequence LVPFFFVNQVVYAFVILTVLI.

The protein belongs to the ATPase protein 8 family. F-type ATPases have 2 components, CF(1) - the catalytic core - and CF(0) - the membrane proton channel.

It is found in the mitochondrion membrane. Its function is as follows. Mitochondrial membrane ATP synthase (F(1)F(0) ATP synthase or Complex V) produces ATP from ADP in the presence of a proton gradient across the membrane which is generated by electron transport complexes of the respiratory chain. F-type ATPases consist of two structural domains, F(1) - containing the extramembraneous catalytic core and F(0) - containing the membrane proton channel, linked together by a central stalk and a peripheral stalk. During catalysis, ATP synthesis in the catalytic domain of F(1) is coupled via a rotary mechanism of the central stalk subunits to proton translocation. Part of the complex F(0) domain. Minor subunit located with subunit a in the membrane. This Aspergillus amstelodami protein is ATP synthase protein 8 (atp8).